The primary structure comprises 139 residues: Ribulose bisphosphate carboxylase small subunit (139 aa).

Belongs to the RuBisCO small chain family. As to quaternary structure, heterohexadecamer of 8 large and 8 small subunits.

The protein resides in the plastid. It is found in the chloroplast. In terms of biological role, ruBisCO catalyzes two reactions: the carboxylation of D-ribulose 1,5-bisphosphate, the primary event in carbon dioxide fixation, as well as the oxidative fragmentation of the pentose substrate in the photorespiration process. Both reactions occur simultaneously and in competition at the same active site. Although the small subunit is not catalytic it is essential for maximal activity. This chain is Ribulose bisphosphate carboxylase small subunit, found in Olisthodiscus luteus (Marine phytoflagellate).